The primary structure comprises 460 residues: Antizyme inhibitor 2 (460 aa).

Residues 117–140 (QIAQIKYAAKHGIQLLSFDNEMEL) are necessary for polyamine uptake stimulation.

The protein belongs to the Orn/Lys/Arg decarboxylase class-II family. ODC antizyme inhibitor subfamily. As to quaternary structure, monomer. Interacts with OAZ1, OAZ2 and OAZ3; this interaction disrupts the interaction between the antizyme and ODC1. Does not form a heterodimer with ODC1. Ubiquitinated, leading to its proteasomal degradation; a process that is reduced in presence of antizymes. May also be degraded through the lysosomal degradative pathway in a proteasomal-independent manner. As to expression, expressed in the neocortex, thalamus, hippocampus, cerebellum, medulla oblongata, gray and white matter. Expressed in neurons, oligodendrocytes, basket, Purkinje and pyramidal cells. Expressed in spermatocytes and Leydig cells of the testis. Expressed in luteal theca cells lining corpus luteum cysts and in hilus cells of the ovary. Expressed in primary and neoplastic mast cells (MC) (at protein level). Highly expressed in brain. Also expressed in testis.

It localises to the nucleus. It is found in the cytoplasm. Its subcellular location is the perinuclear region. The protein resides in the membrane. The protein localises to the cytoplasmic vesicle. It localises to the endoplasmic reticulum-Golgi intermediate compartment. It is found in the golgi apparatus. Its subcellular location is the cis-Golgi network. The protein resides in the trans-Golgi network. The protein localises to the cytoplasmic granule. It localises to the cell projection. It is found in the axon. Its subcellular location is the dendrite. The protein resides in the perikaryon. Its function is as follows. Antizyme inhibitor (AZI) protein that positively regulates ornithine decarboxylase (ODC) activity and polyamine uptake. AZI is an enzymatically inactive ODC homolog that counteracts the negative effect of ODC antizymes (AZs) OAZ1, OAZ2 and OAZ3 on ODC activity by competing with ODC for antizyme-binding. Inhibits antizyme-dependent ODC degradation and releases ODC monomers from their inactive complex with antizymes, leading to formation of the catalytically active ODC homodimer and restoring polyamine production. Participates in the morphological integrity of the trans-Golgi network (TGN) and functions as a regulator of intracellular secretory vesicle trafficking. The sequence is that of Antizyme inhibitor 2 (AZIN2) from Homo sapiens (Human).